The sequence spans 147 residues: UPF0306 protein YPK_3704 (147 aa).

It belongs to the UPF0306 family.

The sequence is that of UPF0306 protein YPK_3704 from Yersinia pseudotuberculosis serotype O:3 (strain YPIII).